A 522-amino-acid polypeptide reads, in one-letter code: MSKIWEDAIKSNAWPFVEAKKILDSLNGQIPEKGYVLFETGYGPSGLPHIGTFGENARMVMVQKAFEQLSDIPTKLICFSDDMDGLRKVPSNIPNPEMVAQYMDMPLTSIPDTFGECESYGHYMNAKLRSFLDKFGFEYEFYSSTNCYKAGMFDEMLRMVLEKYDEIMELMLPTFREERKATYSPFMPICPKTGKVLQVPIEKWDAKAGTVTYKDKAGNYIEVPVTGGHCKLQWKPDFGMRWAALKVDYEMYGKDHLANARLYSEICRILGGKPPVQLCYELFLDENGEKISKSKGNSISIDDWLKYAPVESMALFMYQNPTRAKRLFFDVIPKNVDEYITFNQKYHLEEDRAKRFANPVYHIHHGNVPKIETFGITYSLLLNLTSVCNPSDKSVLWGFISKYEPKATPNTNPYLDHLAEFAIRYYNDFIKAHKSYLSPSEKHKVILQDILDMLSDIADQTEAEAIQKAIYDIGMKAGYENLRDYFKDLYQILLGQNEGPRLGTFIKLYGVQEMKKLVEGQL.

Positions 44-52 (PSGLPHIGT) match the 'HIGH' region motif. Positions 290-294 (KISKS) match the 'KMSKS' region motif. Lysine 293 contributes to the ATP binding site.

The protein belongs to the class-I aminoacyl-tRNA synthetase family.

The protein resides in the cytoplasm. The catalysed reaction is tRNA(Lys) + L-lysine + ATP = L-lysyl-tRNA(Lys) + AMP + diphosphate. The polypeptide is Lysine--tRNA ligase (Rickettsia africae (strain ESF-5)).